A 54-amino-acid polypeptide reads, in one-letter code: Pars intercerebralis major peptide D1 (54 aa).

It belongs to the granulin family. Six disulfide bonds are present. In terms of tissue distribution, brain.

It is found in the secreted. This Locusta migratoria (Migratory locust) protein is Pars intercerebralis major peptide D1.